The primary structure comprises 610 residues: Lipoprotein LpqB (610 aa).

Residues 1 to 27 (MGAEGGGRRRALRLGAYVGCGAVLLTG) form the signal peptide. The N-palmitoyl cysteine moiety is linked to residue Cys-28. Residue Cys-28 is the site of S-diacylglycerol cysteine attachment.

It belongs to the LpqB lipoprotein family.

It localises to the cell membrane. This is Lipoprotein LpqB from Streptomyces avermitilis (strain ATCC 31267 / DSM 46492 / JCM 5070 / NBRC 14893 / NCIMB 12804 / NRRL 8165 / MA-4680).